The sequence spans 86 residues: MAPSTTVTRRVKRKAPRAFLKRTLKQKKPHLGLGRCCDLLIHLNCLLFIQRLAEESRTNACESKSRVIKKDHVLAAGKVILKKSRG.

This sequence belongs to the CENP-W/WIP1 family. As to quaternary structure, heterodimer with CENPT; this dimer coassembles with CENPS-CENPX heterodimers at centromeres to form the tetrameric CENP-T-W-S-X complex, which is a subcomplex of the large constitutive centromere-associated network (CCAN, also known as the interphase centromere complex or ICEN). Interacts with NPM1.

Its subcellular location is the nucleus. It is found in the chromosome. The protein localises to the centromere. The protein resides in the kinetochore. It localises to the nucleus matrix. Its subcellular location is the nucleolus. Its function is as follows. Component of the CENPA-NAC (nucleosome-associated) complex, a complex that plays a central role in assembly of kinetochore proteins, mitotic progression and chromosome segregation. The CENPA-NAC complex recruits the CENPA-CAD (nucleosome distal) complex and may be involved in incorporation of newly synthesized CENPA into centromeres. Part of a nucleosome-associated complex that binds specifically to histone H3-containing nucleosomes at the centromere, as opposed to nucleosomes containing CENPA. Component of the heterotetrameric CENP-T-W-S-X complex that binds and supercoils DNA, and plays an important role in kinetochore assembly. CENPW has a fundamental role in kinetochore assembly and function. It is one of the inner kinetochore proteins, with most further proteins binding downstream. Required for normal chromosome organization and normal progress through mitosis. This is Centromere protein W (Cenpw) from Mus musculus (Mouse).